A 244-amino-acid chain; its full sequence is tRNA pseudouridine synthase A (244 aa).

The active-site Nucleophile is D52. Position 110 (Y110) interacts with substrate.

The protein belongs to the tRNA pseudouridine synthase TruA family. Homodimer.

The enzyme catalyses uridine(38/39/40) in tRNA = pseudouridine(38/39/40) in tRNA. In terms of biological role, formation of pseudouridine at positions 38, 39 and 40 in the anticodon stem and loop of transfer RNAs. In Acetivibrio thermocellus (strain ATCC 27405 / DSM 1237 / JCM 9322 / NBRC 103400 / NCIMB 10682 / NRRL B-4536 / VPI 7372) (Clostridium thermocellum), this protein is tRNA pseudouridine synthase A.